A 264-amino-acid chain; its full sequence is Thymidylate synthase (264 aa).

Position 21 (arginine 21) interacts with dUMP. Histidine 51 lines the (6R)-5,10-methylene-5,6,7,8-tetrahydrofolate pocket. DUMP is bound at residue arginine 126 to arginine 127. Catalysis depends on cysteine 146, which acts as the Nucleophile. Residues arginine 166 to aspartate 169, asparagine 177, and histidine 207 to tyrosine 209 contribute to the dUMP site. Residue aspartate 169 coordinates (6R)-5,10-methylene-5,6,7,8-tetrahydrofolate. (6R)-5,10-methylene-5,6,7,8-tetrahydrofolate is bound at residue alanine 263.

Belongs to the thymidylate synthase family. Bacterial-type ThyA subfamily. As to quaternary structure, homodimer.

The protein localises to the cytoplasm. The enzyme catalyses dUMP + (6R)-5,10-methylene-5,6,7,8-tetrahydrofolate = 7,8-dihydrofolate + dTMP. It participates in pyrimidine metabolism; dTTP biosynthesis. In terms of biological role, catalyzes the reductive methylation of 2'-deoxyuridine-5'-monophosphate (dUMP) to 2'-deoxythymidine-5'-monophosphate (dTMP) while utilizing 5,10-methylenetetrahydrofolate (mTHF) as the methyl donor and reductant in the reaction, yielding dihydrofolate (DHF) as a by-product. This enzymatic reaction provides an intracellular de novo source of dTMP, an essential precursor for DNA biosynthesis. The polypeptide is Thymidylate synthase (Azotobacter vinelandii (strain DJ / ATCC BAA-1303)).